The chain runs to 859 residues: Low-density lipoprotein receptor-related protein 12 (859 aa).

The N-terminal stretch at 1-32 (MACRWSTKESPRWRSALLLLFLAGVYGNGALA) is a signal peptide. The Extracellular segment spans residues 33 to 492 (EHSENVHISG…ENCPVIVPTR (460 aa)). Intrachain disulfides connect Cys-47-Cys-76 and Cys-103-Cys-122. Positions 47 to 159 (CGETPEQIRA…KGFRLAYFSG (113 aa)) constitute a CUB 1 domain. Asn-75 carries N-linked (GlcNAc...) asparagine glycosylation. Asn-146 carries an N-linked (GlcNAc...) asparagine glycan. LDL-receptor class A domains lie at 165–201 (NCAC…EICA) and 214–255 (PCAY…IDCD). Disulfide bonds link Cys-166–Cys-178, Cys-173–Cys-191, Cys-185–Cys-200, Cys-215–Cys-232, Cys-222–Cys-245, Cys-239–Cys-254, and Cys-259–Cys-285. The CUB 2 domain occupies 259-372 (CGQWLKYFYG…RGFNATYQVD (114 aa)). N-linked (GlcNAc...) asparagine glycans are attached at residues Asn-284 and Asn-366. LDL-receptor class A domains are found at residues 374–411 (FCLP…TNCT), 412–449 (MCQK…KNCF), and 450–486 (FCQP…ENCP). 9 cysteine pairs are disulfide-bonded: Cys-375–Cys-388, Cys-382–Cys-401, Cys-395–Cys-410, Cys-413–Cys-426, Cys-420–Cys-439, Cys-433–Cys-448, Cys-451–Cys-463, Cys-458–Cys-476, and Cys-470–Cys-485. N-linked (GlcNAc...) asparagine glycosylation is present at Asn-409. An N-linked (GlcNAc...) asparagine glycan is attached at Asn-441. The chain crosses the membrane as a helical span at residues 493-513 (VITAAVIGSLICGLLLVIALG). Residues 514-859 (CTCKLYSLRM…TSDDEALLLC (346 aa)) are Cytoplasmic-facing. 4 disordered regions span residues 623–678 (ADGD…LPQK), 693–723 (ASSS…SPAR), 748–770 (SSLS…REDD), and 801–823 (DQGQ…SNRD). Composition is skewed to polar residues over residues 748-757 (SSLSQNQSPL) and 801-814 (DQGQ…NATN).

It belongs to the LDLR family. As to quaternary structure, may interact with RACK1, ZFYVE9 and NMRK2. Widely expressed in heart, skeletal muscle, brain, lung, placenta and pancreas, but not in tissues consisting of a large number of epithelial cells, such as liver and kidney. Expressed at very low levels in a number of tumor-derived cell lines.

It localises to the membrane. The protein localises to the coated pit. Its function is as follows. Probable receptor, which may be involved in the internalization of lipophilic molecules and/or signal transduction. May act as a tumor suppressor. The protein is Low-density lipoprotein receptor-related protein 12 (LRP12) of Homo sapiens (Human).